The sequence spans 165 residues: Transcription factor zip-10 (165 aa).

Over residues 53–71 the composition is skewed to low complexity; sequence ASLGTSTTSSSRCSSTESS. Residues 53 to 99 form a disordered region; the sequence is ASLGTSTTSSSRCSSTESSAAPGKIRRGRPQQEIADGQDAHSQKKRH. A coiled-coil region spans residues 104-150; sequence ARQYRAQMRQKVENVKSLHDEKEQLELEVKALRQAVSGLQQENAQKD.

It localises to the nucleus. Transcription factor that regulates the expression of genes in response to changes in temperature. In particular, binds to the promoter region of genes such as asp-17 in response to severe cold to warm temperature transitions to promote gene expression. Promotes stress-induced death, particularly in older animals, following cold shock followed by warming and this may have evolved as a form of kin survival under thermal stress conditions, favoring the survival of younger animals. In Caenorhabditis elegans, this protein is Transcription factor zip-10.